The following is a 257-amino-acid chain: uncharacterized protein (257 aa).

The chain crosses the membrane as a helical span at residues 6 to 26; that stretch reads IFWLNLAAIIIISIVVSGDMF.

This sequence belongs to the staphylococcal tandem lipoprotein family.

Its subcellular location is the cell membrane. This is an uncharacterized protein from Staphylococcus aureus (strain COL).